Reading from the N-terminus, the 937-residue chain is MGKKRIYELAKEINVASKDILETANKKGYDLKNHMATIDDNQEKTLRAAFQTKATPAASKPATPAAPKASEKSESGKIKINKTAIRRRPEADKKPAQHSNNRPQANANRNGQASNGQNRTNNARPNNNSARPNNSRPNTNSRPNNNSQNRSTSANHPMSLQEQISQANARRQRTQERIQQQREQREADEKKRREQANRPRPTRNNASNNRPSNGKPTNGARPTTNSPRPTVTKDGRPLGSSRPNNNNSARPNTTNNRPTNSRPATTPSRPVSAQEMQQKMQANTVSASKPASNNTASKPKNFGPDKKRGGGYNSYGNSQQRFNKKRKKTRKQQLAEQNAAKKEMPQRKERPLPEVLVFSEGMNVADIAKKIHREPAEIIKKLFMLGIMVNMNQSLDKDTIELLATDYGIEAEQKVEVDIADIDSVFETEAKSDANLVSRPPVVTIMGHVDHGKTTLLDNLRNSHVTDGEAGGITQHIGAYQTKLNDRLITFLDTPGHAAFTNMRARGADITDIIILVVAADDGVMPQTIEAINHAKAAKAPIIVAVNKIDKPGANPDHVMEQLMGYGLVPEDWGGDTIFVKISAKTGENIDDLLEMVLLEADVLELKANRDQKAVGTVIEARLDKGKGPVASLLVQQGTLRIGDPIVVGNTFGRVRVMTNDRGRRVKEVFPSEPVEITGLNDVPQAADRFVVFEDEKTARAAGEERAKRALLKERSRSNPVTLDNLFETMKQGELKEVGVIIKADVQGSTEALAGSLRKIEVEGVRVNIIHEAVGAINESDVTLAAASNAIIIGFNVRPTPQAKIQADAEQVDIRLHRIIYKAIEEIEAAMKGMLEPVYEEKVTGQLTVRETYNVSKIGTIAGCIVDTGVIRRDSGVRLIRDSIVIYEGKLSSLKRFKDDVKEVKTGFECGVTIEDYNDIKIDDQIEAYVMEEVPVK.

Residues 47-352 are disordered; sequence RAAFQTKATP…EMPQRKERPL (306 aa). Residues 52-68 show a composition bias toward low complexity; the sequence is TKATPAASKPATPAAPK. A compositionally biased stretch (polar residues) spans 97-116; sequence QHSNNRPQANANRNGQASNG. Residues 117–153 are compositionally biased toward low complexity; that stretch reads QNRTNNARPNNNSARPNNSRPNTNSRPNNNSQNRSTS. Residues 154-169 are compositionally biased toward polar residues; sequence ANHPMSLQEQISQANA. The span at 173 to 197 shows a compositional bias: basic and acidic residues; that stretch reads RTQERIQQQREQREADEKKRREQAN. Residues 202–229 show a composition bias toward polar residues; it reads TRNNASNNRPSNGKPTNGARPTTNSPRP. Over residues 240–269 the composition is skewed to low complexity; that stretch reads SSRPNNNNSARPNTTNNRPTNSRPATTPSR. A compositionally biased stretch (polar residues) spans 274–298; the sequence is QEMQQKMQANTVSASKPASNNTASK. Over residues 322 to 331 the composition is skewed to basic residues; that stretch reads FNKKRKKTRK. Residues 339 to 352 show a composition bias toward basic and acidic residues; it reads AAKKEMPQRKERPL. The tr-type G domain occupies 438–607; it reads SRPPVVTIMG…LLEADVLELK (170 aa). Positions 447–454 are G1; that stretch reads GHVDHGKT. A GTP-binding site is contributed by 447–454; the sequence is GHVDHGKT. The segment at 472-476 is G2; the sequence is GITQH. Residues 493–496 form a G3 region; sequence DTPG. Residues 493 to 497 and 547 to 550 contribute to the GTP site; these read DTPGH and NKID. Residues 547–550 form a G4 region; that stretch reads NKID. Residues 583-585 are G5; it reads SAK.

The protein belongs to the TRAFAC class translation factor GTPase superfamily. Classic translation factor GTPase family. IF-2 subfamily.

It is found in the cytoplasm. One of the essential components for the initiation of protein synthesis. Protects formylmethionyl-tRNA from spontaneous hydrolysis and promotes its binding to the 30S ribosomal subunits. Also involved in the hydrolysis of GTP during the formation of the 70S ribosomal complex. The polypeptide is Translation initiation factor IF-2 (Latilactobacillus sakei subsp. sakei (strain 23K) (Lactobacillus sakei subsp. sakei)).